The primary structure comprises 327 residues: Ribonucleoside-diphosphate reductase small chain (327 aa).

The Fe cation site is built by Asp-70, Glu-101, and His-104. Tyr-108 is an active-site residue. 3 residues coordinate Fe cation: Glu-164, Glu-198, and His-201.

It belongs to the ribonucleoside diphosphate reductase small chain family. As to quaternary structure, heterotetramer composed of a homodimer of the large subunit (R1) and a homodimer of the small subunit (R2). Larger multisubunit protein complex are also active, composed of (R1)n(R2)n. It depends on Fe cation as a cofactor.

It carries out the reaction a 2'-deoxyribonucleoside 5'-diphosphate + [thioredoxin]-disulfide + H2O = a ribonucleoside 5'-diphosphate + [thioredoxin]-dithiol. Its function is as follows. Ribonucleoside-diphosphate reductase holoenzyme provides the precursors necessary for viral DNA synthesis. Allows virus growth in non-dividing cells. Catalyzes the biosynthesis of deoxyribonucleotides from the corresponding ribonucleotides. The sequence is that of Ribonucleoside-diphosphate reductase small chain from Ornithodoros (relapsing fever ticks).